Here is a 768-residue protein sequence, read N- to C-terminus: Ribosomal RNA large subunit methyltransferase K/L (768 aa).

The region spanning 60 to 175 is the THUMP domain; the sequence is DLYKICLWSR…DKQAELYLDL (116 aa).

This sequence belongs to the methyltransferase superfamily. RlmKL family.

The protein localises to the cytoplasm. The catalysed reaction is guanosine(2445) in 23S rRNA + S-adenosyl-L-methionine = N(2)-methylguanosine(2445) in 23S rRNA + S-adenosyl-L-homocysteine + H(+). It carries out the reaction guanosine(2069) in 23S rRNA + S-adenosyl-L-methionine = N(2)-methylguanosine(2069) in 23S rRNA + S-adenosyl-L-homocysteine + H(+). Its function is as follows. Specifically methylates the guanine in position 2445 (m2G2445) and the guanine in position 2069 (m7G2069) of 23S rRNA. In Psychrobacter arcticus (strain DSM 17307 / VKM B-2377 / 273-4), this protein is Ribosomal RNA large subunit methyltransferase K/L.